We begin with the raw amino-acid sequence, 483 residues long: Acetyl-coenzyme A carboxylase carboxyl transferase subunit beta, chloroplastic (483 aa).

A CoA carboxyltransferase N-terminal domain is found at 219-483 (LWVQCENCYG…LHTFFPLNQN (265 aa)). The Zn(2+) site is built by Cys-223, Cys-226, Cys-242, and Cys-245. The C4-type zinc finger occupies 223-245 (CENCYGLNYKKFFKSKMNLCEQC).

The protein belongs to the AccD/PCCB family. As to quaternary structure, acetyl-CoA carboxylase is a heterohexamer composed of biotin carboxyl carrier protein, biotin carboxylase and 2 subunits each of ACCase subunit alpha and ACCase plastid-coded subunit beta (accD). It depends on Zn(2+) as a cofactor.

It localises to the plastid. The protein localises to the chloroplast stroma. The catalysed reaction is N(6)-carboxybiotinyl-L-lysyl-[protein] + acetyl-CoA = N(6)-biotinyl-L-lysyl-[protein] + malonyl-CoA. It participates in lipid metabolism; malonyl-CoA biosynthesis; malonyl-CoA from acetyl-CoA: step 1/1. Its function is as follows. Component of the acetyl coenzyme A carboxylase (ACC) complex. Biotin carboxylase (BC) catalyzes the carboxylation of biotin on its carrier protein (BCCP) and then the CO(2) group is transferred by the transcarboxylase to acetyl-CoA to form malonyl-CoA. The chain is Acetyl-coenzyme A carboxylase carboxyl transferase subunit beta, chloroplastic from Guizotia abyssinica (Niger).